Reading from the N-terminus, the 249-residue chain is Galactan endo-beta-1,3-galactanase (249 aa).

Residues 1–21 (MKLFVVLACLAAPGTFPFVDA) form the signal peptide. The region spanning 34–247 (STYWNNFYPW…KARNVQVTRT (214 aa)) is the GH16 domain. An N-linked (GlcNAc...) asparagine glycan is attached at N48. The active-site Nucleophile is the E138. E143 (proton donor) is an active-site residue. N-linked (GlcNAc...) asparagine glycosylation is present at N156.

The protein belongs to the glycosyl hydrolase 16 family. In terms of processing, N-glycosylated.

The catalysed reaction is The enzyme specifically hydrolyzes beta-1,3-galactan and beta-1,3-galactooligosaccharides.. Functionally, specifically hydrolyzes beta-1,3-galactan in an endo-fashion. Requires at least 3 contiguous beta-1,3-residues. The polypeptide is Galactan endo-beta-1,3-galactanase (EN3GAL) (Flammulina velutipes (Agaricus velutipes)).